Here is a 954-residue protein sequence, read N- to C-terminus: MDQLASLAESVAMEEDSEKQSIKGESSLEPDSTPSSPKITARWNPSEACRPLVDDAPIFYPTNEDFDDPLGYIEKLRSKAESYGICRIVPPVAWRPPCPLKEKKIWENSKFPTRIQFIDLLQNREPIKKSTKTKKRKRRRISKIGYTRRKRDSGCDTASSGSSDSEGKFGFQTGPDFTLEEFQKYDEYFKECYFQSEDHPGSKASENKKFKPKVKDLEGEYWRIVEQATDEVEVYYGADLETKKFGSGFPKYKPGYPISEADQYSQCGWNLNNLSRLPGSVLAFESCDISGVIVPWLYVGMCFSTFCWHVEDHHLYSMNYLHTGDPKVWYGIPGNHAESFENVMKKRLPDLFEEQPDLLHQLVTQLSPRILKEEGVPVYRAVQRSGEFILTFPKAYHSGFNCGFNCAEAVNVAPVDWLVHGQNAVEGYSKQRRKSSLSHDKLLLGAAMEATYCLWELSLSKKKTPVIARWKRVCSEDGLLTKAVKKRVQMEEERLNHLQDGFSLRKMEGDFDNKRERECFLCFYDLHMSASSCKCSPNRFACLIHAKDLCSCESKDRYILIRHTLDELWALVRALEGDLDAIDLWASKCRDQYPSQHPRAREYAYLKSAPCIKSRGSSKVQQREQNNLQLVSERLQSDLTSNKEVQLKQDGDSDVNRHGHESERNHVHGITDKSAVTDVKLGVGGKFDEKKISVESQNPHSVSDVGCSELAKKVDGCLGGKDQNAATNRLSLSVELLSSGSLVVKKLWCSKQAIYPKGFKSRVKFLSVLDPTNLTNYISEVLDAGLLGPLFRVSVEDYPTENFSNVSAEKCWQMVTQRLKLEIIKKCDQPVSSLTSLQPLESINGLEMFGFLSPHVIKVVEALDPKHQLEEYWNQKAVKLFGAEPIKEGEKDDTEKGGASDPSLDRDTRLLRGLLKKATPEELVMMHGLLCGETRNTELKEELSTLVDKMEISP.

The disordered stretch occupies residues 1–46 (MDQLASLAESVAMEEDSEKQSIKGESSLEPDSTPSSPKITARWNPS). Positions 29–38 (EPDSTPSSPK) are enriched in polar residues. Positions 56–97 (APIFYPTNEDFDDPLGYIEKLRSKAESYGICRIVPPVAWRPP) constitute a JmjN domain. Residues 136–143 (RKRRRISK) carry the Nuclear localization signal 1 motif. The disordered stretch occupies residues 148 to 170 (RRKRDSGCDTASSGSSDSEGKFG). The JmjC domain maps to 263–429 (QYSQCGWNLN…HGQNAVEGYS (167 aa)). The Fe cation site is built by H309, E311, and H397. A Nuclear localization signal 2 motif is present at residues 470-477 (WKRVCSED). Positions 519, 522, 533, 535, 542, 545, 550, and 552 each coordinate Zn(2+). The C5HC2 zinc finger occupies 519–571 (CFLCFYDLHMSASSCKCSPNRFACLIHAKDLCSCESKDRYILIRHTLDELWAL). Positions 641–670 (SNKEVQLKQDGDSDVNRHGHESERNHVHGI) are disordered. Basic and acidic residues predominate over residues 645–670 (VQLKQDGDSDVNRHGHESERNHVHGI). In terms of domain architecture, FYR N-terminal spans 726 to 784 (ATNRLSLSVELLSSGSLVVKKLWCSKQAIYPKGFKSRVKFLSVLDPTNLTNYISEVLDA). One can recognise an FYR C-terminal domain in the interval 786-876 (LLGPLFRVSV…HQLEEYWNQK (91 aa)). Residues 884–905 (EPIKEGEKDDTEKGGASDPSLD) are disordered. Positions 885-905 (PIKEGEKDDTEKGGASDPSLD) are enriched in basic and acidic residues.

Belongs to the JARID1 histone demethylase family. In terms of assembly, interacts with NAC050 and NAC051/NAC052. Interacts with THAL in the nucleus. Requires Fe(2+) as cofactor. As to expression, expressed in shoot apex, primary root tip, trichomes of young leaves, leaf vascular tissues, anther filaments and styles. Detected in inflorescences, leaves, stems, roots and siliques. Mostly expressed in floral organs, and, at low levels, in other organs.

It localises to the nucleus. Its subcellular location is the nucleoplasm. The enzyme catalyses N(6),N(6),N(6)-trimethyl-L-lysyl(4)-[histone H3] + 2-oxoglutarate + O2 = N(6),N(6)-dimethyl-L-lysyl(4)-[histone H3] + formaldehyde + succinate + CO2. The catalysed reaction is N(6),N(6)-dimethyl-L-lysyl(4)-[histone H3] + 2-oxoglutarate + O2 = N(6)-methyl-L-lysyl(4)-[histone H3] + formaldehyde + succinate + CO2. It catalyses the reaction N(6)-methyl-L-lysyl(4)-[histone H3] + 2-oxoglutarate + O2 = L-lysyl(4)-[histone H3] + formaldehyde + succinate + CO2. It carries out the reaction N(6),N(6),N(6)-trimethyl-L-lysyl(4)-[histone H3] + 3 2-oxoglutarate + 3 O2 = L-lysyl(4)-[histone H3] + 3 formaldehyde + 3 succinate + 3 CO2. In terms of biological role, transcriptional repressor. Histone demethylase that demethylates 'Lys-4' (H3K4me) of histone H3 with a higher activity for H3K4me3 and H3K4me2 than H3K4me1. No activity on H3K9me3/2, H3K36me3/2 and H3K27me3/2. Function as a nocturne 'eraser' to counteract the diurnal 'writer' methylase activity of ATXR3/SDG2 thus orchestrating the circadian rhythm of histone modifications (e.g. H3K4me3) and modulating the rhythmic expression of diurnal target genes; this mechanism also relies on the circadian clock oscillators CCA1 and LHY. Involved in a negative regulation of root meristem growth upon suboptimal root growth conditions. Represses FT and TSF expression to inhibit the floral transition. Binds around the transcription start site of the FT locus. Involved in the DRM2-mediated maintenance of DNA methylation, but not required for the de novo DNA methylation. Required for demethylating histone H3K4me3 at the target of RNA silencing. Counteracts the DNA methylation of expressed transgenes; specific attenuation of transgene DNA methylation enhances the production of aberrant RNAs (e.g. uncapped and antisense) that readily induce systemic RDR6-dependent post-transcriptional transgene silencing (PTGS) spreading. Together with NAC051/NAC052 and NAC050, regulates gene expression and flowering time, probably by the promotion of RNA-mediated gene silencing. Together with JMJ16 and JMJ17, required for plant growth and development. Promotes local and systemic immunity (especially toward the bacterial pathogen Pseudomonas syringae Pst DC3000 avrRpt2) by regulating positively pathogen-induced H3K4me3 enrichment and expression of defense genes involved in salicylic acid (SA)- and pipecolic acid (Pip)-mediated defense pathways (e.g. PR1, FMO1, ALD1 and SARD4). This chain is Lysine-specific demethylase JMJ14, found in Arabidopsis thaliana (Mouse-ear cress).